Consider the following 194-residue polypeptide: Holliday junction branch migration complex subunit RuvA (194 aa).

Residues 1-64 (MISRLTGKLV…EDAHLLFGFA (64 aa)) are domain I. The domain II stretch occupies residues 65–143 (TAEERKTFRQ…AHTVTDGLFA (79 aa)). The interval 144 to 147 (AAPA) is flexible linker. The segment at 147 to 194 (AADETEDIVSTLLALGYSEREAKAAVKGVPEGTDVGEGVRLALKNLLK) is domain III.

This sequence belongs to the RuvA family. As to quaternary structure, homotetramer. Forms an RuvA(8)-RuvB(12)-Holliday junction (HJ) complex. HJ DNA is sandwiched between 2 RuvA tetramers; dsDNA enters through RuvA and exits via RuvB. An RuvB hexamer assembles on each DNA strand where it exits the tetramer. Each RuvB hexamer is contacted by two RuvA subunits (via domain III) on 2 adjacent RuvB subunits; this complex drives branch migration. In the full resolvosome a probable DNA-RuvA(4)-RuvB(12)-RuvC(2) complex forms which resolves the HJ.

It is found in the cytoplasm. The RuvA-RuvB-RuvC complex processes Holliday junction (HJ) DNA during genetic recombination and DNA repair, while the RuvA-RuvB complex plays an important role in the rescue of blocked DNA replication forks via replication fork reversal (RFR). RuvA specifically binds to HJ cruciform DNA, conferring on it an open structure. The RuvB hexamer acts as an ATP-dependent pump, pulling dsDNA into and through the RuvAB complex. HJ branch migration allows RuvC to scan DNA until it finds its consensus sequence, where it cleaves and resolves the cruciform DNA. This is Holliday junction branch migration complex subunit RuvA from Neisseria meningitidis serogroup B (strain ATCC BAA-335 / MC58).